Consider the following 92-residue polypeptide: C-C motif chemokine 3 (92 aa).

The N-terminal stretch at 1–23 (MQVSTAALAVLLCTMALCNQFSA) is a signal peptide. Cystine bridges form between C33–C57 and C34–C73.

This sequence belongs to the intercrine beta (chemokine CC) family. As to quaternary structure, self-associates. Also heterodimer of MIP-1-alpha(4-69) and MIP-1-beta(3-69). Interacts with CCR1.

It localises to the secreted. In terms of biological role, monokine with inflammatory and chemokinetic properties. Binds to CCR1, CCR4 and CCR5. One of the major HIV-suppressive factors produced by CD8+ T-cells. Recombinant MIP-1-alpha induces a dose-dependent inhibition of different strains of HIV-1, HIV-2, and simian immunodeficiency virus (SIV). The protein is C-C motif chemokine 3 (CCL3) of Pan troglodytes (Chimpanzee).